The chain runs to 272 residues: Alcohol dehydrogenase-related 31 kDa protein (272 aa).

11-34 (YVADCGGIALETSKVLMTKNIAKL) serves as a coordination point for NAD(+). Ser-139 serves as a coordination point for substrate. The Proton acceptor role is filled by Tyr-152.

Belongs to the short-chain dehydrogenases/reductases (SDR) family.

This is Alcohol dehydrogenase-related 31 kDa protein (Adhr) from Drosophila melanogaster (Fruit fly).